The sequence spans 351 residues: S-adenosylmethionine:tRNA ribosyltransferase-isomerase (351 aa).

This sequence belongs to the QueA family. As to quaternary structure, monomer.

Its subcellular location is the cytoplasm. The catalysed reaction is 7-aminomethyl-7-carbaguanosine(34) in tRNA + S-adenosyl-L-methionine = epoxyqueuosine(34) in tRNA + adenine + L-methionine + 2 H(+). It functions in the pathway tRNA modification; tRNA-queuosine biosynthesis. Functionally, transfers and isomerizes the ribose moiety from AdoMet to the 7-aminomethyl group of 7-deazaguanine (preQ1-tRNA) to give epoxyqueuosine (oQ-tRNA). The chain is S-adenosylmethionine:tRNA ribosyltransferase-isomerase from Sphingopyxis alaskensis (strain DSM 13593 / LMG 18877 / RB2256) (Sphingomonas alaskensis).